The sequence spans 466 residues: 3-isopropylmalate dehydratase large subunit (466 aa).

Residues Cys347, Cys407, and Cys410 each contribute to the [4Fe-4S] cluster site.

Belongs to the aconitase/IPM isomerase family. LeuC type 1 subfamily. Heterodimer of LeuC and LeuD. [4Fe-4S] cluster is required as a cofactor.

It carries out the reaction (2R,3S)-3-isopropylmalate = (2S)-2-isopropylmalate. It functions in the pathway amino-acid biosynthesis; L-leucine biosynthesis; L-leucine from 3-methyl-2-oxobutanoate: step 2/4. In terms of biological role, catalyzes the isomerization between 2-isopropylmalate and 3-isopropylmalate, via the formation of 2-isopropylmaleate. In Blochmanniella floridana, this protein is 3-isopropylmalate dehydratase large subunit.